The sequence spans 877 residues: DNA mismatch repair protein MutS (877 aa).

630-637 contacts ATP; sequence GPNMAGKS.

Belongs to the DNA mismatch repair MutS family.

Its function is as follows. This protein is involved in the repair of mismatches in DNA. It is possible that it carries out the mismatch recognition step. This protein has a weak ATPase activity. This chain is DNA mismatch repair protein MutS, found in Ruegeria pomeroyi (strain ATCC 700808 / DSM 15171 / DSS-3) (Silicibacter pomeroyi).